Consider the following 337-residue polypeptide: MIIATIGSHSALQILHGAKKEGFQTMVITDNKRENFYKNFSFIDNIYAYASLDEAVSIINGIKDYGILIPHGSLVEYLGKERVDKIETKIFGNKKIFEWEADQKKKMELLRKSNIKIPEIFERPEDVDRLVIVKLNGAKGGKGYFLARNKSEVKEGIQKLIESKMIRDENEVIIQEYVVGVPMYFQFFYSDIINRTEIFGIDIRYETNIDGLRRLPFEYMKELKINPTFVVVGNIPAVARESLLPVALEYANNFVRTTKELVPPGMIGPFCLESIITDNSDIVVFEFSGRIVAGTNLYVNGSPYSWLYWDEPMSIGRRIAREIRVANEKDKLSLVVS.

2 residues coordinate 5-amino-1-(5-phospho-beta-D-ribosyl)imidazole-4-carboxamide: H9 and S73. The 231-residue stretch at 94 to 324 (KKIFEWEADQ…IGRRIAREIR (231 aa)) folds into the ATP-grasp domain. ATP-binding positions include 124–184 (PEDV…VPMY) and E206. Residue N234 participates in 5-amino-1-(5-phospho-beta-D-ribosyl)imidazole-4-carboxamide binding. Residues E273 and E286 each contribute to the Mg(2+) site.

It belongs to the phosphohexose mutase family. The cofactor is Mg(2+). Mn(2+) serves as cofactor.

It catalyses the reaction 5-amino-1-(5-phospho-beta-D-ribosyl)imidazole-4-carboxamide + formate + ATP = 5-formamido-1-(5-phospho-D-ribosyl)imidazole-4-carboxamide + ADP + phosphate. The protein operates within purine metabolism; IMP biosynthesis via de novo pathway; 5-formamido-1-(5-phospho-D-ribosyl)imidazole-4-carboxamide from 5-amino-1-(5-phospho-D-ribosyl)imidazole-4-carboxamide (formate route): step 1/1. Catalyzes the ATP- and formate-dependent formylation of 5-aminoimidazole-4-carboxamide-1-beta-d-ribofuranosyl 5'-monophosphate (AICAR) to 5-formaminoimidazole-4-carboxamide-1-beta-d-ribofuranosyl 5'-monophosphate (FAICAR) in the absence of folates. The polypeptide is 5-formaminoimidazole-4-carboxamide-1-(beta)-D-ribofuranosyl 5'-monophosphate synthetase (Saccharolobus solfataricus (strain ATCC 35092 / DSM 1617 / JCM 11322 / P2) (Sulfolobus solfataricus)).